The primary structure comprises 747 residues: Heterogeneous nuclear ribonucleoprotein U-like protein 2 (747 aa).

The SAP domain maps to 3–37 (VKRLKVTELRSELQRRGLDSRGLKVDLAQRLQEAL). Disordered regions lie at residues 40–242 (EMLE…EEED) and 627–666 (EEAR…GQRR). Acidic residues predominate over residues 73-97 (GDEEEDEEEEEEDEEALLEDEDEEP). Residues 115 to 125 (EAAAMEAAAEP) show a composition bias toward low complexity. Over residues 137-147 (GSGGVNGGEEQ) the composition is skewed to gly residues. Residues 148–163 (GLGKREEDEPEERSGD) are compositionally biased toward basic and acidic residues. S161 is subject to Phosphoserine. T165 carries the phosphothreonine modification. S168, S185, S188, S226, and S228 each carry phosphoserine. Residues 185–223 (SEKSKPAGSDGERRGVKRQRDEKDEHGRAYYEFREEAYH) show a composition bias toward basic and acidic residues. Residues 226–419 (SKSPLPPEEE…VELNFGQKEE (194 aa)) form the B30.2/SPRY domain. A compositionally biased stretch (acidic residues) spans 232–242 (PEEEAKDEEED). Residues 627-639 (EEARKLLPPSEKR) are compositionally biased toward basic and acidic residues. Basic residues predominate over residues 640 to 654 (TNRRNNRNKRNRQNR). An omega-N-methylarginine mark is found at R656, R684, R738, and R747.

As to quaternary structure, binds to MLF1 and retains it in the nucleus.

It is found in the nucleus. The protein is Heterogeneous nuclear ribonucleoprotein U-like protein 2 (HNRNPUL2) of Homo sapiens (Human).